The chain runs to 131 residues: Small ribosomal subunit protein uS8 (131 aa).

This sequence belongs to the universal ribosomal protein uS8 family. In terms of assembly, part of the 30S ribosomal subunit. Contacts proteins S5 and S12.

Functionally, one of the primary rRNA binding proteins, it binds directly to 16S rRNA central domain where it helps coordinate assembly of the platform of the 30S subunit. The protein is Small ribosomal subunit protein uS8 of Chlorobium phaeovibrioides (strain DSM 265 / 1930) (Prosthecochloris vibrioformis (strain DSM 265)).